The primary structure comprises 431 residues: MSLMTKLGFRALVASCLIAAGSAANAQVNVLITGVGSTQFPIATANFANEAGLPQQVTSIVRADLARSGKFTNIDAGSTPVPETASVDLGAWKAKGANAFVAGSVNHEGNGQYKINFILYDTVKQQSLGGLSLSANDTTLRTAGHKIADYIYQKLLGVRGVFATRLSYVIKTGNRYQLQISDSDGQNARIALSSTEPIISPAWSPSGTKVAYVSFERKKPIVYIHDLPTGRRYMVSDQKGNNSAPAWSPDGNTLAVALSLTGNTQIYSVNSNGGGLRRLTQSSSIDTEPFYSPDGRWIYFTSDRGGAPQIYRMPAQGESAGAAQRVTFTGSYNTSPRVSPDGKLLAYISRTGGGFKLYVQDLQTGAANAITNTNRDESPSFAANGQYILYATQSGGRNVLAAVPSDGSAPPQILSVQGGSVREPSWGPFMQ.

The N-terminal stretch at 1–26 is a signal peptide; that stretch reads MSLMTKLGFRALVASCLIAAGSAANA. The disordered stretch occupies residues 411–431; sequence PQILSVQGGSVREPSWGPFMQ.

This sequence belongs to the TolB family. The Tol-Pal system is composed of five core proteins: the inner membrane proteins TolA, TolQ and TolR, the periplasmic protein TolB and the outer membrane protein Pal. They form a network linking the inner and outer membranes and the peptidoglycan layer.

The protein resides in the periplasm. Part of the Tol-Pal system, which plays a role in outer membrane invagination during cell division and is important for maintaining outer membrane integrity. This Burkholderia multivorans (strain ATCC 17616 / 249) protein is Tol-Pal system protein TolB.